Consider the following 232-residue polypeptide: Putative caffeoyl-CoA O-methyltransferase At1g67980 (232 aa).

Lys8 is a binding site for substrate. Residues Val52, Glu74, 76 to 77, Ser82, and Asp100 each bind S-adenosyl-L-methionine; that span reads GV. Asp149 lines the substrate pocket. Position 149 (Asp149) interacts with a divalent metal cation. Asp151 is an S-adenosyl-L-methionine binding site. Asp175 and Asn176 together coordinate a divalent metal cation.

It belongs to the class I-like SAM-binding methyltransferase superfamily. Cation-dependent O-methyltransferase family. CCoAMT subfamily. The cofactor is a divalent metal cation.

The enzyme catalyses (E)-caffeoyl-CoA + S-adenosyl-L-methionine = (E)-feruloyl-CoA + S-adenosyl-L-homocysteine + H(+). The protein operates within aromatic compound metabolism; phenylpropanoid biosynthesis. Methylates caffeoyl-CoA to feruloyl-CoA and 5-hydroxyferuloyl-CoA to sinapoyl-CoA. Plays a role in the synthesis of feruloylated polysaccharides. Involved in the reinforcement of the plant cell wall. Also involved in the responding to wounding or pathogen challenge by the increased formation of cell wall-bound ferulic acid polymers. The sequence is that of Putative caffeoyl-CoA O-methyltransferase At1g67980 from Arabidopsis thaliana (Mouse-ear cress).